The following is a 164-amino-acid chain: I-Kappa-B like protein F1 (164 aa).

ANK repeat units follow at residues 57 to 89 (HGRQ…NINA), 94 to 124 (TGNT…DLGA), and 128 to 157 (QQET…AYNN).

It belongs to the polydnaviridae I-Kappa-B-like protein family.

Its function is as follows. Suppresses the host immune response through NF-kappa-B inactivation. Possesses ankyrin repeat domains required for NF-kappa-B binding but lacks the regulatory regions required for dissociation from NF-kappa-B and degradation. Therefore, prevents host NF-kappa-B release and subsequent activation. This chain is I-Kappa-B like protein F1 (F2), found in Microplitis demolitor bracovirus (isolate Webb) (MdBV).